The primary structure comprises 124 residues: Small ribosomal subunit protein uS13 (124 aa).

Residues Arg-92–Ala-117 are compositionally biased toward basic residues. Residues Arg-92 to Lys-124 are disordered.

This sequence belongs to the universal ribosomal protein uS13 family. Part of the 30S ribosomal subunit. Forms a loose heterodimer with protein S19. Forms two bridges to the 50S subunit in the 70S ribosome.

In terms of biological role, located at the top of the head of the 30S subunit, it contacts several helices of the 16S rRNA. In the 70S ribosome it contacts the 23S rRNA (bridge B1a) and protein L5 of the 50S subunit (bridge B1b), connecting the 2 subunits; these bridges are implicated in subunit movement. Contacts the tRNAs in the A and P-sites. The sequence is that of Small ribosomal subunit protein uS13 from Mycoplasmoides gallisepticum (strain R(low / passage 15 / clone 2)) (Mycoplasma gallisepticum).